We begin with the raw amino-acid sequence, 190 residues long: Anthranilate synthase component 2 (190 aa).

The 190-residue stretch at Met-1–Asn-190 folds into the Glutamine amidotransferase type-1 domain. An L-glutamine-binding site is contributed by Cys-52–Gly-54. Residue Cys-79 is the Nucleophile; for GATase activity of the active site. L-glutamine contacts are provided by residues Gln-83 and Ser-129–Leu-130. Active-site residues include His-169 and Glu-171.

As to quaternary structure, tetramer of two components I and two components II.

It localises to the plastid. The protein localises to the cyanelle. The catalysed reaction is chorismate + L-glutamine = anthranilate + pyruvate + L-glutamate + H(+). Its pathway is amino-acid biosynthesis; L-tryptophan biosynthesis; L-tryptophan from chorismate: step 1/5. In Cyanophora paradoxa, this protein is Anthranilate synthase component 2 (trpG).